A 123-amino-acid polypeptide reads, in one-letter code: Acidic phospholipase A2 (123 aa).

7 disulfides stabilise this stretch: Cys-26/Cys-116, Cys-28/Cys-44, Cys-43/Cys-95, Cys-49/Cys-123, Cys-50/Cys-88, Cys-57/Cys-81, and Cys-75/Cys-86. 3 residues coordinate Ca(2+): Tyr-27, Gly-29, and Gly-31. His-47 is an active-site residue. Asp-48 lines the Ca(2+) pocket. Residue Asp-89 is part of the active site.

The protein belongs to the phospholipase A2 family. Group II subfamily. D49 sub-subfamily. In terms of assembly, homodimer. It depends on Ca(2+) as a cofactor. As to expression, expressed by the venom gland.

The protein localises to the secreted. It carries out the reaction a 1,2-diacyl-sn-glycero-3-phosphocholine + H2O = a 1-acyl-sn-glycero-3-phosphocholine + a fatty acid + H(+). Snake venom phospholipase A2 (PLA2) that inhibits ADP-induced platelet aggregation. PLA2 catalyzes the calcium-dependent hydrolysis of the 2-acyl groups in 3-sn-phosphoglycerides. This chain is Acidic phospholipase A2, found in Deinagkistrodon acutus (Hundred-pace snake).